The sequence spans 98 residues: NADH-ubiquinone oxidoreductase chain 4L (98 aa).

3 helical membrane-spanning segments follow: residues 2-22 (PSIS…MLIF), 29-49 (SLLC…LTIL), and 61-81 (ILLL…LVTV).

The protein belongs to the complex I subunit 4L family. In terms of assembly, core subunit of respiratory chain NADH dehydrogenase (Complex I) which is composed of 45 different subunits.

It is found in the mitochondrion inner membrane. It carries out the reaction a ubiquinone + NADH + 5 H(+)(in) = a ubiquinol + NAD(+) + 4 H(+)(out). Functionally, core subunit of the mitochondrial membrane respiratory chain NADH dehydrogenase (Complex I) which catalyzes electron transfer from NADH through the respiratory chain, using ubiquinone as an electron acceptor. Part of the enzyme membrane arm which is embedded in the lipid bilayer and involved in proton translocation. The protein is NADH-ubiquinone oxidoreductase chain 4L (MT-ND4L) of Hapalemur aureus (Golden bamboo lemur).